A 255-amino-acid chain; its full sequence is Accessory gland-specific peptide 26Aa (255 aa).

Residues 1–18 (MNLILLCSQILLLLFTVA) form the signal peptide. The segment at 86–110 (PINNSKSRKNSSTLPSQILTDKPNQ) is disordered. Positions 87 to 110 (INNSKSRKNSSTLPSQILTDKPNQ) are enriched in polar residues. N-linked (GlcNAc...) asparagine glycans are attached at residues Asn88, Asn95, and Asn136. Disordered regions lie at residues 177–196 (NAQN…SKDI) and 235–255 (NNPA…PSTT). Positions 183–192 (KSTKSCKKRP) are enriched in basic residues. Over residues 245–255 (KSPSEGNPSTT) the composition is skewed to polar residues.

It undergoes several cleavages as it is secreted and it is further processed in the recipient female. As to expression, main cells of the accessory glands of males.

The protein resides in the secreted. The protein localises to the extracellular space. Its function is as follows. This protein is transferred from male to female's hemolymph during mating, affecting egglaying and behavior after mating. The sequence is that of Accessory gland-specific peptide 26Aa (Acp26Aa) from Drosophila sechellia (Fruit fly).